We begin with the raw amino-acid sequence, 577 residues long: External alternative NAD(P)H-ubiquinone oxidoreductase B1, mitochondrial (577 aa).

Residues 1-35 (MRGFTYLSKVLHSHSSYSKLLVLCSVSTGGLLVYA) constitute a mitochondrion transit peptide. Residue 57–87 (RVVVLGTGWGGTSFLKDVDISSYDVQVVSPR) participates in FAD binding. 221 to 257 (LHFVIVGGGPTGVEFAAELHDYVYEDLVKIYPSVKDF) contributes to the NAD(+) binding site. The region spanning 378-413 (KVMEDISAIFKAADKDDSGTLSIEEFRDVLEDIIIR) is the EF-hand domain. 5 residues coordinate Ca(2+): Asp-391, Asp-393, Ser-395, Thr-397, and Glu-402. A Microbody targeting signal motif is present at residues 568-577 (YIFGRDSSRI).

This sequence belongs to the NADH dehydrogenase family. FAD serves as cofactor.

The protein localises to the mitochondrion inner membrane. Its subcellular location is the peroxisome. It carries out the reaction a quinone + NADH + H(+) = a quinol + NAD(+). The enzyme catalyses a ubiquinone + NADH + H(+) = a ubiquinol + NAD(+). Activity is calcium-dependent with a more pronounced effect at higher pH. Functionally, alternative NADH-ubiquinone oxidoreductase which catalyzes the oxidation of mitochondrial NADH does not translocate protons across the inner mitochondrial membrane. Calcium-dependent NAD(P)H dehydrogenase. Binds calcium ions. The chain is External alternative NAD(P)H-ubiquinone oxidoreductase B1, mitochondrial (NDB1) from Solanum tuberosum (Potato).